The sequence spans 152 residues: Putative membrane protein insertion efficiency factor (152 aa).

The tract at residues 81–152 (AAGGYDPVPG…IVGSGRGPWV (72 aa)) is disordered.

This sequence belongs to the UPF0161 family.

It is found in the cell membrane. Functionally, could be involved in insertion of integral membrane proteins into the membrane. The chain is Putative membrane protein insertion efficiency factor from Frankia casuarinae (strain DSM 45818 / CECT 9043 / HFP020203 / CcI3).